The chain runs to 216 residues: DNA replication complex GINS protein psf1 (216 aa).

Residues 110-133 are disordered; sequence QTTGGPKGVTEGNEGGGTTSSLSP. The segment covering 111-127 has biased composition (gly residues); that stretch reads TTGGPKGVTEGNEGGGT.

This sequence belongs to the GINS1/PSF1 family. Component of the GINS complex which is a heterotetramer of div-26/sld5, drc-1/psf1, drc-2/psf2 and drc-3/psf3.

The protein resides in the nucleus. Functionally, the GINS complex plays an essential role in the initiation of DNA replication. This Neurospora crassa (strain ATCC 24698 / 74-OR23-1A / CBS 708.71 / DSM 1257 / FGSC 987) protein is DNA replication complex GINS protein psf1 (drc-1).